We begin with the raw amino-acid sequence, 1187 residues long: Myelin transcription factor 1-like protein (1187 aa).

A disordered region spans residues 1–20 (MDVDAEEKRHRTRSKGVRVP). The CCHHC-type 1 zinc finger occupies 22-65 (EPAIQELFSCPTPGCDGSGHVSGKYARHRSVYGCPLAKKRKTQD). Zn(2+) contacts are provided by Cys31, Cys36, His49, and Cys55. 2 disordered regions span residues 56–178 (PLAK…QMSC) and 221–248 (RTES…GRKS). Over residues 89–172 (ECYESDGTED…EEEEEEEENE (84 aa)) the composition is skewed to acidic residues. Residue Ser251 is modified to Phosphoserine. Disordered stretches follow at residues 343 to 422 (SETN…DRSE) and 450 to 509 (REKM…PTPG). The span at 344-358 (ETNPQDRSQPPNMSV) shows a compositional bias: polar residues. Composition is skewed to basic and acidic residues over residues 362–377 (VRQE…DRSY), 401–412 (AKEDGCHERDDD), and 450–504 (REKM…RESK). 2 CCHHC-type zinc fingers span residues 496–539 (SRTE…PPEI) and 540–583 (LAMH…KLAK). Positions 505, 510, 523, 529, 549, 554, 567, and 573 each coordinate Zn(2+). The interval 684–708 (ASPSSSTTSSYAPSSSSNLSCGGGS) is disordered. 3 CCHHC-type zinc fingers span residues 895–938 (LATS…GIRI), 944–987 (DKED…QKDG), and 997–1040 (KSVK…MKKA). The Zn(2+) site is built by Cys904, Cys909, His922, Cys928, Cys953, Cys958, His971, Cys977, Cys1006, Cys1011, His1024, and Cys1030. Residues 1055–1131 (SNGIENDEEI…LANLSQSLIH (77 aa)) adopt a coiled-coil conformation.

Belongs to the MYT1 family. Interacts with SIN3B. As to expression, brain, testis and pituitary gland. Expression is higher in the brain than in the testis and pituitary gland. Highest level expression seen in the developing CNS.

The protein resides in the nucleus. It localises to the chromosome. Its function is as follows. Transcription factor that plays a key role in neuronal differentiation. Acts by specifically repressing expression of non-neuronal genes during neuron differentiation. In contrast to other transcription repressors that inhibit specific lineages, mediates repression of multiple differentiation programs. Also represses expression of negative regulators of neurogenesis, such as members of the Notch signaling pathway, including HES1. The combination of three transcription factors, ASCL1, POU3F2/BRN2 and MYT1L, is sufficient to reprogram fibroblasts and other somatic cells into induced neuronal (iN) cells in vitro. Directly binds the 5'-AAGTT-3' core motif present on the promoter of target genes and represses transcription by recruiting a multiprotein complex containing SIN3B. The 5'-AAGTT-3' core motif is absent from the promoter of neural genes. The polypeptide is Myelin transcription factor 1-like protein (Myt1l) (Rattus norvegicus (Rat)).